We begin with the raw amino-acid sequence, 347 residues long: Protein RecA (347 aa).

66-73 (GPESSGKT) is an ATP binding site.

Belongs to the RecA family.

It localises to the cytoplasm. Can catalyze the hydrolysis of ATP in the presence of single-stranded DNA, the ATP-dependent uptake of single-stranded DNA by duplex DNA, and the ATP-dependent hybridization of homologous single-stranded DNAs. It interacts with LexA causing its activation and leading to its autocatalytic cleavage. This chain is Protein RecA, found in Burkholderia cepacia (Pseudomonas cepacia).